A 206-amino-acid polypeptide reads, in one-letter code: Large ribosomal subunit protein uL4 (206 aa).

The segment at 47 to 71 is disordered; that stretch reads TRAQKGRSEVAGSTRKQWRQKGTGR.

The protein belongs to the universal ribosomal protein uL4 family. As to quaternary structure, part of the 50S ribosomal subunit.

Its function is as follows. One of the primary rRNA binding proteins, this protein initially binds near the 5'-end of the 23S rRNA. It is important during the early stages of 50S assembly. It makes multiple contacts with different domains of the 23S rRNA in the assembled 50S subunit and ribosome. Forms part of the polypeptide exit tunnel. The sequence is that of Large ribosomal subunit protein uL4 from Nitrosomonas eutropha (strain DSM 101675 / C91 / Nm57).